A 113-amino-acid polypeptide reads, in one-letter code: MWDPLVNEFPDSVHGLRCMLAIKYLQALEDTYEPSTLGHDLVRDLISVIRARNYVEATRRYHHFHSRLEGSSKAELRQPIQEPCYCPHCPRHKSKTGLDEQAHVQKAHDVQDV.

The disordered stretch occupies residues 94-113; sequence SKTGLDEQAHVQKAHDVQDV. Residues 96 to 113 show a composition bias toward basic and acidic residues; that stretch reads TGLDEQAHVQKAHDVQDV.

This sequence belongs to the geminiviridae protein AV2/V2 family. In terms of assembly, interacts with host SGS3.

The protein resides in the host cytoplasm. Its subcellular location is the host perinuclear region. In terms of biological role, through its interaction with host SGS3, acts as a suppressor of RNA-mediated gene silencing, also known as post-transcriptional gene silencing (PTGS), a mechanism of plant viral defense that limits the accumulation of viral RNAs. This is an uncharacterized protein from African cassava mosaic virus (isolate Nigerian) (ACMV).